The primary structure comprises 476 residues: Probable pectin lyase F (476 aa).

The N-terminal stretch at 1-20 (MTLLRHLLTATALLGASVQA) is a signal peptide. An intrachain disulfide couples Cys-84 to Cys-108. N-linked (GlcNAc...) asparagine glycans are attached at residues Asn-103 and Asn-131. Residue Arg-258 is part of the active site. N-linked (GlcNAc...) asparagine glycosylation is found at Asn-277 and Asn-318. A disulfide bridge links Cys-325 with Cys-333. Residue Asn-385 is glycosylated (N-linked (GlcNAc...) asparagine). A disordered region spans residues 412 to 476 (FVPAYSEAGP…HHHQGHGRGY (65 aa)). Positions 426–453 (VPTQPSWSWRTVTNGPAPTGAPSDSPSA) are enriched in polar residues. Residues 465–476 (NKHHHQGHGRGY) show a composition bias toward basic residues.

The protein belongs to the polysaccharide lyase 1 family.

The protein resides in the secreted. It catalyses the reaction Eliminative cleavage of (1-&gt;4)-alpha-D-galacturonan methyl ester to give oligosaccharides with 4-deoxy-6-O-methyl-alpha-D-galact-4-enuronosyl groups at their non-reducing ends.. Pectinolytic enzymes consist of four classes of enzymes: pectin lyase, polygalacturonase, pectin methylesterase and rhamnogalacturonase. Among pectinolytic enzymes, pectin lyase is the most important in depolymerization of pectin, since it cleaves internal glycosidic bonds of highly methylated pectins. This chain is Probable pectin lyase F (pelF), found in Aspergillus niger (strain ATCC MYA-4892 / CBS 513.88 / FGSC A1513).